The following is a 361-amino-acid chain: Phospho-N-acetylmuramoyl-pentapeptide-transferase (361 aa).

Transmembrane regions (helical) follow at residues 27–47 (GAMV…IDHL), 72–92 (TPTM…LLWA), 94–114 (LHNP…FVGF), 133–153 (LRLA…IWAG), 169–189 (FAIN…VGAG), 200–220 (GLAI…AYLV), 240–260 (LAVL…FNAP), 264–284 (IFMG…IAVA), 289–309 (IVLA…IVQV), and 338–358 (QIVI…LSTL).

It belongs to the glycosyltransferase 4 family. MraY subfamily. Mg(2+) is required as a cofactor.

It localises to the cell inner membrane. It carries out the reaction UDP-N-acetyl-alpha-D-muramoyl-L-alanyl-gamma-D-glutamyl-meso-2,6-diaminopimeloyl-D-alanyl-D-alanine + di-trans,octa-cis-undecaprenyl phosphate = di-trans,octa-cis-undecaprenyl diphospho-N-acetyl-alpha-D-muramoyl-L-alanyl-D-glutamyl-meso-2,6-diaminopimeloyl-D-alanyl-D-alanine + UMP. It participates in cell wall biogenesis; peptidoglycan biosynthesis. Its function is as follows. Catalyzes the initial step of the lipid cycle reactions in the biosynthesis of the cell wall peptidoglycan: transfers peptidoglycan precursor phospho-MurNAc-pentapeptide from UDP-MurNAc-pentapeptide onto the lipid carrier undecaprenyl phosphate, yielding undecaprenyl-pyrophosphoryl-MurNAc-pentapeptide, known as lipid I. This is Phospho-N-acetylmuramoyl-pentapeptide-transferase from Afipia carboxidovorans (strain ATCC 49405 / DSM 1227 / KCTC 32145 / OM5) (Oligotropha carboxidovorans).